Reading from the N-terminus, the 128-residue chain is uncharacterized protein (128 aa).

This sequence to M.jannaschii MJ0766.

This is an uncharacterized protein from Methanocaldococcus jannaschii (strain ATCC 43067 / DSM 2661 / JAL-1 / JCM 10045 / NBRC 100440) (Methanococcus jannaschii).